Here is a 419-residue protein sequence, read N- to C-terminus: Elongation factor Tu, chloroplastic (419 aa).

The 205-residue stretch at 10–214 (KPHVNIGTIG…KVDEYIPTPD (205 aa)) folds into the tr-type G domain. A G1 region spans residues 19–26 (GHVDHGKT). 19–26 (GHVDHGKT) lines the GTP pocket. Thr-26 lines the Mg(2+) pocket. A G2 region spans residues 60–64 (GITIN). The interval 81 to 84 (DCPG) is G3. GTP-binding positions include 81-85 (DCPGH) and 136-139 (NKED). The G4 stretch occupies residues 136 to 139 (NKED). The G5 stretch occupies residues 174 to 176 (SAL).

This sequence belongs to the TRAFAC class translation factor GTPase superfamily. Classic translation factor GTPase family. EF-Tu/EF-1A subfamily.

The protein localises to the plastid. Its subcellular location is the chloroplast. The enzyme catalyses GTP + H2O = GDP + phosphate + H(+). In terms of biological role, GTP hydrolase that promotes the GTP-dependent binding of aminoacyl-tRNA to the A-site of ribosomes during protein biosynthesis. The polypeptide is Elongation factor Tu, chloroplastic (tufA) (Tetradesmus obliquus (Green alga)).